Reading from the N-terminus, the 227-residue chain is Phosphoribosylformylglycinamidine synthase subunit PurQ (227 aa).

The Glutamine amidotransferase type-1 domain maps to 3-225; it reads FAVIVFPGSN…LKQWRETYVV (223 aa). The active-site Nucleophile is the Cys-86. Catalysis depends on residues His-194 and Glu-196.

Part of the FGAM synthase complex composed of 1 PurL, 1 PurQ and 2 PurS subunits.

Its subcellular location is the cytoplasm. It carries out the reaction N(2)-formyl-N(1)-(5-phospho-beta-D-ribosyl)glycinamide + L-glutamine + ATP + H2O = 2-formamido-N(1)-(5-O-phospho-beta-D-ribosyl)acetamidine + L-glutamate + ADP + phosphate + H(+). The enzyme catalyses L-glutamine + H2O = L-glutamate + NH4(+). It participates in purine metabolism; IMP biosynthesis via de novo pathway; 5-amino-1-(5-phospho-D-ribosyl)imidazole from N(2)-formyl-N(1)-(5-phospho-D-ribosyl)glycinamide: step 1/2. Part of the phosphoribosylformylglycinamidine synthase complex involved in the purines biosynthetic pathway. Catalyzes the ATP-dependent conversion of formylglycinamide ribonucleotide (FGAR) and glutamine to yield formylglycinamidine ribonucleotide (FGAM) and glutamate. The FGAM synthase complex is composed of three subunits. PurQ produces an ammonia molecule by converting glutamine to glutamate. PurL transfers the ammonia molecule to FGAR to form FGAM in an ATP-dependent manner. PurS interacts with PurQ and PurL and is thought to assist in the transfer of the ammonia molecule from PurQ to PurL. In Bacillus cereus (strain B4264), this protein is Phosphoribosylformylglycinamidine synthase subunit PurQ.